The sequence spans 671 residues: MADKKRYEELINILDQYSYDYYVIDNPTVEDAEYDQKMQELLKIEEAHPEWVTPESPSKRVGGEVLEGFKKVAHDTPMLSLANAFNQEDLADFDRRIRDKVGDDIAYMCELKIDGLAVSLQYENGKYKQGATRGDGTIGEDITANLRTIRSIPMKLQKDYSIEVRGEAFMPKRSFQKLNEIREEEGQMLFANPRNAAAGSLRQLDTKIAASRNLDIFLYAVADFGEMGVETHSAGLDMLETLGLKVNKERRLCNSLEEVYAYIEEWTEKRAGLAYDIDGIVLKLNNLEQQRQMGNTVKSPRWSIAYKFPAEEVPTKLLDIELNVGRTGVITPTAVLEPVRVAGTTVSRASLHNEDLITEKDIRIGDTVLIKKAGDIIPEVIKSITEKRSGSEEPFHMPKNCPACDSELVRLEEEVALRCINPKCPAQIKEGLIHFVSRNAMNIDGLGEKVIIQLFSQHLIKDVADLFFLSKEKLLELERMGEKSVTNLLASIEASKQNSLEKLLFGLGIRHVGAKAAKSLAIHFDTMDNLKVADKETLTSINDIGEKMADSIVTYFANEEVHDLLEELKRAGVNMTYTGPKLEDMSEEELVFAGKTVVLTGKLEKLTRNDAKALIESLGGNVSGSVSKKTDVVVAGSDAGSKLAKAEELAIPIWSEEDLIEYLPDEGGLNE.

Residues 31–35 (DAEYD), 80–81 (SL), and glutamate 110 each bind NAD(+). Lysine 112 serves as the catalytic N6-AMP-lysine intermediate. NAD(+) is bound by residues arginine 133, glutamate 167, lysine 283, and lysine 307. Residues cysteine 401, cysteine 404, cysteine 419, and cysteine 424 each contribute to the Zn(2+) site. One can recognise a BRCT domain in the interval 587–671 (EEELVFAGKT…YLPDEGGLNE (85 aa)).

This sequence belongs to the NAD-dependent DNA ligase family. LigA subfamily. Requires Mg(2+) as cofactor. Mn(2+) is required as a cofactor.

The enzyme catalyses NAD(+) + (deoxyribonucleotide)n-3'-hydroxyl + 5'-phospho-(deoxyribonucleotide)m = (deoxyribonucleotide)n+m + AMP + beta-nicotinamide D-nucleotide.. DNA ligase that catalyzes the formation of phosphodiester linkages between 5'-phosphoryl and 3'-hydroxyl groups in double-stranded DNA using NAD as a coenzyme and as the energy source for the reaction. It is essential for DNA replication and repair of damaged DNA. This chain is DNA ligase, found in Listeria monocytogenes serotype 4b (strain CLIP80459).